A 384-amino-acid chain; its full sequence is Chaperone protein DnaJ (384 aa).

Residues 5-70 enclose the J domain; that stretch reads DYYEVLGVAR…QKKAAYDRFG (66 aa). The segment at 138–216 adopts a CR-type zinc-finger fold; that stretch reads GAQKTINVPG…CRGAGRVQKE (79 aa). Residues C151, C154, C168, C171, C190, C193, C204, and C207 each contribute to the Zn(2+) site. CXXCXGXG motif repeat units lie at residues 151–158, 168–175, 190–197, and 204–211; these read CAACNGTG, CPTCSGMG, CPTCSGHG, and CQECRGAG. The interval 300–322 is disordered; the sequence is KVPPGTQSGKQLRLRGKGMPPLR.

The protein belongs to the DnaJ family. Homodimer. The cofactor is Zn(2+).

Its subcellular location is the cytoplasm. In terms of biological role, participates actively in the response to hyperosmotic and heat shock by preventing the aggregation of stress-denatured proteins and by disaggregating proteins, also in an autonomous, DnaK-independent fashion. Unfolded proteins bind initially to DnaJ; upon interaction with the DnaJ-bound protein, DnaK hydrolyzes its bound ATP, resulting in the formation of a stable complex. GrpE releases ADP from DnaK; ATP binding to DnaK triggers the release of the substrate protein, thus completing the reaction cycle. Several rounds of ATP-dependent interactions between DnaJ, DnaK and GrpE are required for fully efficient folding. Also involved, together with DnaK and GrpE, in the DNA replication of plasmids through activation of initiation proteins. In Paracoccus denitrificans (strain Pd 1222), this protein is Chaperone protein DnaJ.